Consider the following 489-residue polypeptide: Lysine--tRNA ligase (489 aa).

The Mg(2+) site is built by Glu-399 and Glu-406.

Belongs to the class-II aminoacyl-tRNA synthetase family. In terms of assembly, homodimer. Mg(2+) is required as a cofactor.

It is found in the cytoplasm. The catalysed reaction is tRNA(Lys) + L-lysine + ATP = L-lysyl-tRNA(Lys) + AMP + diphosphate. In Roseiflexus sp. (strain RS-1), this protein is Lysine--tRNA ligase.